The primary structure comprises 638 residues: MGGTIDINKISKLSESAQVDALSTQPFPASKKIYAEGSRPDIRVAMREITLTPTPLQDGATEENAPLRVYDTSGPYTDPAVEIDVRRGLPRMREAWINDRADTEHLTGATSFYAKSREQNLSLDNLRFEHRHAPRKALAGGNVSQLHYARKGIITPEMEYIAIRENLALEQAEIENAMRSQHPGMNFGANTPRYITPEFVRQEVAAGRAVIPCNINHPEAEPMIIGRNFHVKVNANIGNSAVTSSIEEEVEKLVWATRWGADTVMDLSTGKNIHETREWIIRNSPVPIGTVPIYQALEKVDGVAEDLNWEVFRDTLIEQAEQGVDYFTIHAGVLLRYVPMTAKRLTGIVSRGGSIMAKWCLAHHQENFLYTHFEEICEIMKAYDVSFSLGDGLRPGCIADANDEAQFSELRTLGELTEIAWKHDVQTIIEGPGHVPMHMIKENMEEQLKHCKEAPFYTLGPLITDISPGYDHFSSGIGAAMIGWYGCAMLCYVTPKEHLGLPNKDDVKQGLIAYKIAAHAADLAKGHPGAQLRDNAMSKARFEFRWEDQFNIALDPDTARAYHDETLPKEGHKLAHFCSMCGPKFCSMKITQDVRDYSAKLEAEKAQAEGASQQEAEQGMQEMSQKYKDAGRRLYHEV.

Residues N236, M265, Y294, H330, 350 to 352 (SRG), 391 to 394 (DGLR), and E430 each bind substrate. H434 serves as a coordination point for Zn(2+). A substrate-binding site is contributed by Y457. Zn(2+) is bound at residue H498. [4Fe-4S] cluster-binding residues include C578, C581, and C586. A compositionally biased stretch (low complexity) spans 608–624 (AEGASQQEAEQGMQEMS). A disordered region spans residues 608–633 (AEGASQQEAEQGMQEMSQKYKDAGRR).

The protein belongs to the ThiC family. Homodimer. It depends on [4Fe-4S] cluster as a cofactor.

The catalysed reaction is 5-amino-1-(5-phospho-beta-D-ribosyl)imidazole + S-adenosyl-L-methionine = 4-amino-2-methyl-5-(phosphooxymethyl)pyrimidine + CO + 5'-deoxyadenosine + formate + L-methionine + 3 H(+). Its pathway is cofactor biosynthesis; thiamine diphosphate biosynthesis. Its function is as follows. Catalyzes the synthesis of the hydroxymethylpyrimidine phosphate (HMP-P) moiety of thiamine from aminoimidazole ribotide (AIR) in a radical S-adenosyl-L-methionine (SAM)-dependent reaction. The protein is Phosphomethylpyrimidine synthase of Hahella chejuensis (strain KCTC 2396).